The primary structure comprises 1432 residues: MKLSKLEKALKKVRVTPQRDDTYTIGNVLWAIRMCRLMGLDCCIDEATAAEVAILIGRFQSLDLQDSPLKGKDEKAILTTLKVLWSLLAGHHPENSDMAEKYWEAWTIRERESQKEEEGEITSIYPQLRKNFPAVSTSDGSPRYDPDLTKQLKIWADATEKHGVDHHAVNILGVITANLTQSEIRLLLQSTPQWRLDIQLIESKLNAREHAHRVWKESHPEAPKTDEIIGKGLTAAEQATLTTQECRDTYRQWVLEAALEVAQGKHDRPGPINIHQGPKEPYPEFVNKLVTALEGMAAPETTKQYLLDHLSVDHANEDCRAVLLPLGPSAPMERKLEACRAVGSSKQKMQFLAEAFAAINVKGDGEVQRCYGCGKPGHIRRDCKNQKCFKCGKPGHLQRNCKSKNREALLCPFWAEERIPSGEDFCDPVCSPVGIRLNRQPFIKIFLGGRWVRALIDTGADEVVLKDIHWDRIKGVPAASVVQVGVTGRNIARRKSNVEWRFKNRYGIVDVLFSNTPVNLLGRSVLQSIVTKFTLAAHTKQIQPLPVKLHGPGPRVPQWPLTLEKYKALKEIVEELLKDGKISRTPWDNPFNTPVFVIKKKGGSKWRMLMDFRALNKVTNKGQEFQIGLPYPPGIQQCEHITAIDIKDAYFTIPLDENFRQYTAFSVVPVNREGPLERYHWNVLPQGWVCSPAIYQTTTQEIIAEIKDRFPDIVLYQYMDDLLIGSDRPDHKRVVSEIREELGAYGFKTPEEKIQEEQVQWLGYELTPKRWRFQPRQIKIKKVVTVNELQQMIGNCVWVQPEVKIPLSPLSDLLKGKTDLKDKIKLTEEAIQCLETVNKRLKDPEWKERIKEGTELVVKIQLIPEGVVYDLLQDGNPIWGGVKGWDYNHANKIKKMLSIMKKLSRIVMIMTGREVSFLIPGDSEDWESALQRINTLTEIPEVKFYKHACRWTSVCGPVIERYPTYYTDGGKKGSKAAAAYWREGKIRREVFPGTNQQAELKAVLMALQDGPAKMNIITDSRYAFEGMREEPETWGREGLWKEIGEELRRKEYVGVSWVPGHKGIGGNTEVDQEVQKALQGPITVSLPQEILLEAGETKLVKTGIFWEGLRPCKLRPEEGLKLKGSLIDEELQLEITNTQNSRVGIRQGQTIGTCFIEAIPQAIEEHEKWHTTAEILAREFQLPRRVAREIVHRCQACKRTVSCPRRGTNPRERFLWQMDNTHLEGKIIWVAVETNSGLIEARVIPEESAQSIVFCILMLVYRYTVYHIHSDNGPCFIAQKVEALCKYLKITKTTGIPYNPQAQAIVERTHRDIKDKIAAFREDCETVEAALSLTLVALNKKRGGIGGHTPYEIYLESEYNKYQEQQNHYNNFKTEKWAYVRDKRKVWKGPYKVLWDGEGAAVVEENAMPTLYPHRHMRFIPPPNTDTQDGNL.

2 CCHC-type zinc fingers span residues 368 to 385 (QRCYGCGKPGHIRRDCKN) and 386 to 403 (QKCFKCGKPGHLQRNCKS). Positions 452-525 (VRALIDTGAD…TPVNLLGRSV (74 aa)) constitute a Peptidase A2 domain. Catalysis depends on Asp457, which acts as the For protease activity; shared with dimeric partner. The 188-residue stretch at 579–766 (DGKISRTPWD…EQVQWLGYEL (188 aa)) folds into the Reverse transcriptase domain. Residues Asp645, Asp720, and Asp721 each coordinate Mg(2+). The stretch at 815–843 (KGKTDLKDKIKLTEEAIQCLETVNKRLKD) forms a coiled coil. The 121-residue stretch at 959-1079 (IERYPTYYTD…VDQEVQKALQ (121 aa)) folds into the RNase H type-1 domain. 4 residues coordinate Mg(2+): Asp968, Glu999, Asp1019, and Asp1071. The segment at 1157–1198 (EAIPQAIEEHEKWHTTAEILAREFQLPRRVAREIVHRCQACK) adopts an Integrase-type zinc-finger fold. Positions 1166, 1170, 1194, and 1197 each coordinate Zn(2+). The Integrase catalytic domain maps to 1206 to 1358 (RGTNPRERFL…TPYEIYLESE (153 aa)). Residues Asp1219 and Asp1271 each coordinate Mg(2+). The integrase-type DNA-binding region spans 1376–1422 (KWAYVRDKRKVWKGPYKVLWDGEGAAVVEENAMPTLYPHRHMRFIPP).

Post-translationally, specific enzymatic cleavages by the viral protease yield mature proteins. The protease is released by autocatalytic cleavage. The polyprotein is cleaved during and after budding, this process is termed maturation.

It is found in the virion. It catalyses the reaction DNA(n) + a 2'-deoxyribonucleoside 5'-triphosphate = DNA(n+1) + diphosphate. It carries out the reaction Endohydrolysis of RNA in RNA/DNA hybrids. Three different cleavage modes: 1. sequence-specific internal cleavage of RNA. Human immunodeficiency virus type 1 and Moloney murine leukemia virus enzymes prefer to cleave the RNA strand one nucleotide away from the RNA-DNA junction. 2. RNA 5'-end directed cleavage 13-19 nucleotides from the RNA end. 3. DNA 3'-end directed cleavage 15-20 nucleotides away from the primer terminus.. The enzyme catalyses 3'-end directed exonucleolytic cleavage of viral RNA-DNA hybrid.. In terms of biological role, matrix protein p16 forms the outer shell of the core of the virus, lining the inner surface of the viral membrane. Its function is as follows. Capsid protein p26 forms the conical core of the virus that encapsulates the genomic RNA-nucleocapsid complex. Functionally, the aspartyl protease mediates proteolytic cleavages of Gag and Gag-Pol polyproteins during or shortly after the release of the virion from the plasma membrane. Cleavages take place as an ordered, step-wise cascade to yield mature proteins. This process is called maturation. Displays maximal activity during the budding process just prior to particle release from the cell. Reverse transcriptase/ribonuclease H (RT) is a multifunctional enzyme that converts the viral RNA genome into dsDNA in the cytoplasm, shortly after virus entry into the cell. This enzyme displays a DNA polymerase activity that can copy either DNA or RNA templates, and a ribonuclease H (RNase H) activity that cleaves the RNA strand of RNA-DNA heteroduplexes in a partially processive 3' to 5' endonucleasic mode. Conversion of viral genomic RNA into dsDNA requires many steps. A tRNA binds to the primer-binding site (PBS) situated at the 5'-end of the viral RNA. RT uses the 3' end of the tRNA primer to perform a short round of RNA-dependent minus-strand DNA synthesis. The reading proceeds through the U5 region and ends after the repeated (R) region which is present at both ends of viral RNA. The portion of the RNA-DNA heteroduplex is digested by the RNase H, resulting in a ssDNA product attached to the tRNA primer. This ssDNA/tRNA hybridizes with the identical R region situated at the 3' end of viral RNA. This template exchange, known as minus-strand DNA strong stop transfer, can be either intra- or intermolecular. RT uses the 3' end of this newly synthesized short ssDNA to perform the RNA-dependent minus-strand DNA synthesis of the whole template. RNase H digests the RNA template except for a polypurine tract (PPT) situated at the 5'-end of the genome. It is not clear if both polymerase and RNase H activities are simultaneous. RNase H probably can proceed both in a polymerase-dependent (RNA cut into small fragments by the same RT performing DNA synthesis) and a polymerase-independent mode (cleavage of remaining RNA fragments by free RTs). Secondly, RT performs DNA-directed plus-strand DNA synthesis using the PPT that has not been removed by RNase H as primer. PPT and tRNA primers are then removed by RNase H. The 3' and 5' ssDNA PBS regions hybridize to form a circular dsDNA intermediate. Strand displacement synthesis by RT to the PBS and PPT ends produces a blunt ended, linear dsDNA copy of the viral genome that includes long terminal repeats (LTRs) at both ends. In terms of biological role, integrase catalyzes viral DNA integration into the host chromosome, by performing a series of DNA cutting and joining reactions. This enzyme activity takes place after virion entry into a cell and reverse transcription of the RNA genome in dsDNA. The polypeptide is Gag-Pol polyprotein (gag-pol) (Jembrana disease virus (JDV)).